A 345-amino-acid polypeptide reads, in one-letter code: GTP cyclohydrolase-2 (345 aa).

A disordered region spans residues 1–27 (MTIDNYDNSKQDSSKYEVSGTGDGRNG). 143–147 (RIHSE) contributes to the GTP binding site. Zn(2+)-binding residues include Cys148, Cys159, and Cys161. Residues Gln164, 197 to 199 (EGR), and Thr219 contribute to the GTP site. Catalysis depends on Asp231, which acts as the Proton acceptor. Arg233 acts as the Nucleophile in catalysis. The GTP site is built by Thr254 and Lys259. Residues 312 to 345 (PLKLHTNPQPTETSEAQNQNRMNSALSSTSTLAI) are disordered. The segment covering 317-345 (TNPQPTETSEAQNQNRMNSALSSTSTLAI) has biased composition (polar residues).

It belongs to the GTP cyclohydrolase II family. Requires Zn(2+) as cofactor.

It carries out the reaction GTP + 4 H2O = 2,5-diamino-6-hydroxy-4-(5-phosphoribosylamino)-pyrimidine + formate + 2 phosphate + 3 H(+). Its pathway is cofactor biosynthesis; riboflavin biosynthesis; 5-amino-6-(D-ribitylamino)uracil from GTP: step 1/4. In terms of biological role, catalyzes the conversion of GTP to 2,5-diamino-6-ribosylamino-4(3H)-pyrimidinone 5'-phosphate (DARP), formate and pyrophosphate. The polypeptide is GTP cyclohydrolase-2 (RIB1) (Saccharomyces cerevisiae (strain ATCC 204508 / S288c) (Baker's yeast)).